The following is a 463-amino-acid chain: MHLHFTPRQIVEKLDQYIIGQKDAKKAVAVALRNRYRRSKLVENLRDEIAPKNILMIGPTGVGKTEVARRMAKLVGAPFIKVEATKFTEVGYVGRDVESMVRDLVETSVRIVKEEMVVKVQDKAEEQANQRLVEILVPSPEKQSGFKNPLEMLFGGNQNSNQTSDAQEDDEIEKKRQDVERKLAAGLLEDEVISIEVTEQQSSMFDMLQGTGMEQMGMNFQDALGSIMPKKTKKRKLSVKEARKLLTNEEAQRLIDMDEVTQEAVYRAEQLGIIFIDEIDKIAGKQSNSVDVSREGVQRDILPIVEGSNVATKYGSVKTDYILFVAAGAFHMSKPSDLIPELQGRFPIRVELTKLSADDFVKILIEPDNALIKQYTALLATEGIEIEFSDEAIRKIAEIAYQVNQDTDNIGARRLHTVMEKLLEDLSFEASEITLEKITITPQYVEEKLATIAKNKDVSQFIL.

ATP contacts are provided by residues Ile-19 and 61-66 (GVGKTE). The segment at 154-175 (FGGNQNSNQTSDAQEDDEIEKK) is disordered. Residues 156-165 (GNQNSNQTSD) are compositionally biased toward polar residues. Positions 277, 341, and 413 each coordinate ATP.

This sequence belongs to the ClpX chaperone family. HslU subfamily. As to quaternary structure, a double ring-shaped homohexamer of HslV is capped on each side by a ring-shaped HslU homohexamer. The assembly of the HslU/HslV complex is dependent on binding of ATP.

The protein localises to the cytoplasm. In terms of biological role, ATPase subunit of a proteasome-like degradation complex; this subunit has chaperone activity. The binding of ATP and its subsequent hydrolysis by HslU are essential for unfolding of protein substrates subsequently hydrolyzed by HslV. HslU recognizes the N-terminal part of its protein substrates and unfolds these before they are guided to HslV for hydrolysis. This chain is ATP-dependent protease ATPase subunit HslU, found in Bacillus mycoides (strain KBAB4) (Bacillus weihenstephanensis).